The sequence spans 134 residues: Cilia- and flagella-associated protein 144 (134 aa).

The segment at 76–95 is disordered; it reads QGPRKKYPETQTENQEVGWD.

Belongs to the CFAP144 family. As to quaternary structure, microtubule inner protein component of sperm flagellar doublet microtubules.

The protein localises to the cytoplasm. Its subcellular location is the cytoskeleton. The protein resides in the cilium axoneme. It is found in the flagellum axoneme. Its function is as follows. Microtubule inner protein (MIP) part of the dynein-decorated doublet microtubules (DMTs) in cilia axoneme, which is required for motile cilia beating. This chain is Cilia- and flagella-associated protein 144, found in Homo sapiens (Human).